A 596-amino-acid chain; its full sequence is Neuroepithelial cell-transforming gene 1 protein (596 aa).

Residue M1 is modified to N-acetylmethionine. Residues 1–44 (MEPELAAQKQPRPRRRSRRASGLSTEGATGPSADTSGSELDGRC) form a disordered region. A necessary for nuclear localization region spans residues 1–74 (MEPELAAQKQ…LKRKRREKDD (74 aa)). Residues 12–19 (RPRRRSRR) carry the Nuclear localization signal motif. Phosphoserine is present on residues S21 and S32. Residues 22–38 (GLSTEGATGPSADTSGS) show a composition bias toward polar residues. The Nuclear localization signal signature appears at 66–72 (KRKRREK). Phosphoserine occurs at positions 100, 106, and 122. The segment at 127-146 (GDHRSPASAQKFSSRSTVPT) is disordered. Over residues 133–145 (ASAQKFSSRSTVP) the composition is skewed to polar residues. The DH domain occupies 174 to 356 (RRQEAIYEMS…QGVLSDINLK (183 aa)). Positions 386–501 (VLLCHGELRS…WFNCIRAAIA (116 aa)) constitute a PH domain. Phosphoserine is present on S508. The disordered stretch occupies residues 562–596 (MAEDSKSLKTHQTQPGIRRARDKALSGGKRKETLV).

Interacts with RHOA in its GTP- and GDP-bound states, and with CDC42 in its GTP-bound state. Interacts with the PDZ 1 domain of BAIAP1. Widely expressed.

It localises to the cytoplasm. The protein localises to the nucleus. Acts as a guanine nucleotide exchange factor (GEF) for RhoA GTPase. May be involved in activation of the SAPK/JNK pathway Stimulates genotoxic stress-induced RHOB activity in breast cancer cells leading to their cell death. This Homo sapiens (Human) protein is Neuroepithelial cell-transforming gene 1 protein (NET1).